The following is a 178-amino-acid chain: Phosphopantetheine adenylyltransferase (178 aa).

Substrate is bound at residue Ser8. Residues 8–9 (SF) and His16 contribute to the ATP site. Residues Lys40, Thr72, and Arg86 each contribute to the substrate site. ATP is bound by residues 87-89 (GLR), Glu97, and 122-128 (YSFLSSS).

The protein belongs to the bacterial CoaD family. In terms of assembly, homohexamer. It depends on Mg(2+) as a cofactor.

It is found in the cytoplasm. It catalyses the reaction (R)-4'-phosphopantetheine + ATP + H(+) = 3'-dephospho-CoA + diphosphate. The protein operates within cofactor biosynthesis; coenzyme A biosynthesis; CoA from (R)-pantothenate: step 4/5. Reversibly transfers an adenylyl group from ATP to 4'-phosphopantetheine, yielding dephospho-CoA (dPCoA) and pyrophosphate. This Picosynechococcus sp. (strain ATCC 27264 / PCC 7002 / PR-6) (Agmenellum quadruplicatum) protein is Phosphopantetheine adenylyltransferase.